Here is a 293-residue protein sequence, read N- to C-terminus: Formamidopyrimidine-DNA glycosylase (293 aa).

Residue Pro-2 is the Schiff-base intermediate with DNA of the active site. Glu-3 serves as the catalytic Proton donor. Residue Lys-61 is the Proton donor; for beta-elimination activity of the active site. His-104, Arg-123, and Lys-169 together coordinate DNA. The FPG-type zinc finger occupies 255–289 (DAYGREGEPCRRCGAIMRRDKFMNRSSFYCPRCQP). Arg-279 (proton donor; for delta-elimination activity) is an active-site residue.

The protein belongs to the FPG family. In terms of assembly, monomer. Zn(2+) serves as cofactor.

The catalysed reaction is Hydrolysis of DNA containing ring-opened 7-methylguanine residues, releasing 2,6-diamino-4-hydroxy-5-(N-methyl)formamidopyrimidine.. It catalyses the reaction 2'-deoxyribonucleotide-(2'-deoxyribose 5'-phosphate)-2'-deoxyribonucleotide-DNA = a 3'-end 2'-deoxyribonucleotide-(2,3-dehydro-2,3-deoxyribose 5'-phosphate)-DNA + a 5'-end 5'-phospho-2'-deoxyribonucleoside-DNA + H(+). Functionally, involved in base excision repair of DNA damaged by oxidation or by mutagenic agents. Acts as a DNA glycosylase that recognizes and removes damaged bases. Has a preference for oxidized purines, such as 7,8-dihydro-8-oxoguanine (8-oxoG). Has AP (apurinic/apyrimidinic) lyase activity and introduces nicks in the DNA strand. Cleaves the DNA backbone by beta-delta elimination to generate a single-strand break at the site of the removed base with both 3'- and 5'-phosphates. This is Formamidopyrimidine-DNA glycosylase from Mycolicibacterium vanbaalenii (strain DSM 7251 / JCM 13017 / BCRC 16820 / KCTC 9966 / NRRL B-24157 / PYR-1) (Mycobacterium vanbaalenii).